The sequence spans 591 residues: Paxillin (591 aa).

Met-1 carries the N-acetylmethionine modification. N-acetylserine is present on Asp-2. Positions 3 to 15 match the LD motif 1 motif; the sequence is DLDALLADLESTT. A disordered region spans residues 17–138; that stretch reads HISKRPVFLS…PSPTVMSTSL (122 aa). Position 31 is a phosphotyrosine; by PTK6 (Tyr-31). A compositionally biased stretch (pro residues) spans 45–54; it reads VPPPVPPPPS. Over residues 69–106 the composition is skewed to polar residues; it reads WQPSSSRFIHQQPQSSSPVYGSSAKTSSVSNPQDSVGS. Ser-83 and Ser-85 each carry phosphoserine. Residue Tyr-88 is modified to Phosphotyrosine. Phosphoserine is present on Ser-106. A Phosphotyrosine; by PTK6 modification is found at Tyr-118. Phosphoserine occurs at positions 119, 126, and 130. Over residues 121-137 the composition is skewed to polar residues; sequence PNKQKSAEPSPTVMSTS. Thr-132 is subject to Phosphothreonine. Ser-137, Ser-140, and Ser-143 each carry phosphoserine. An LD motif 2 motif is present at residues 144–156; sequence ELDRLLLELNAVQ. Residues 159–260 are disordered; it reads PPGFPADEAN…TQQQTRISAS (102 aa). Tyr-181 carries the phosphotyrosine modification. An LD motif 3 motif is present at residues 216-228; sequence SVESLLDELESSV. The residue at position 230 (Ser-230) is a Phosphoserine. The span at 236–260 shows a compositional bias: polar residues; sequence TVNQGEMSSPQRVTSTQQQTRISAS. A Phosphoserine; by CDK5 modification is found at Ser-244. Phosphoserine; by SLK is present on Ser-250. Ser-258, Ser-261, Ser-272, Ser-303, Ser-322, Ser-332, and Ser-340 each carry phosphoserine. The segment at 262-315 is required for binding to PARVA and ILK; that stretch reads ATRELDELMASLSDFKIQGLEQRADGERCWAAGWPRDGGRSSPGGQDEGGFMAQ. The LD motif 4 motif lies at 265-276; sequence ELDELMASLSDF. The interval 291–335 is disordered; it reads WAAGWPRDGGRSSPGGQDEGGFMAQGKTGSSSPPGGPPKPGSQLD. An LD motif 5 motif is present at residues 333-345; sequence QLDSMLGSLQSDL. LIM zinc-binding domains follow at residues 356-415, 416-473, 474-533, and 534-591; these read GVCG…LFSP, RCYY…DMFA, PKCG…RRGS, and LCSG…KLFC. Ser-533 is subject to Phosphoserine.

Belongs to the paxillin family. Interacts in vitro with VCL/vinculin as well as to the SH3 domain of SRC and, when tyrosine phosphorylated, to the SH2 domain of CRK. Interacts with GIT1. Interacts with NUDT16L1/SDOS. Interacts with PTK2/FAK1. Interacts with PTK2B/PYK2. Interacts with ASAP2. Interacts with unphosphorylated ITGA4. Interacts with RNF5. Interacts with PDCD10. Interacts with NEK3, the interaction is prolactin-dependent. Interacts with PTK6. Interacts with TGFB1I1. Interacts with SORBS1. Interacts with PARVB. Interacts (via LD motif 4) with PARVA/PARVIN. Interacts (via LD motif 4) with ILK. Interacts (via cytoplasmic domain) with CEACAM1; the interaction is phosphotyrosyl-dependent. Interacts with LIMA1; this complex stabilizes actin dynamics. Interacts with CD36 (via C-terminus). Interacts with TRIM15. Interacts with PAK4; PAK4 acts as a scaffold to suppport PAXI phosphorylation at Ser-272. In terms of assembly, interacts strongly with PTK2/FAK1 and weakly with VCL/vinculin. As to quaternary structure, interacts strongly with VCL/vinculin but only weakly with PTK2/FAK1. Post-translationally, phosphorylated by MAPK1/ERK2. Phosphorylated on tyrosine residues during integrin-mediated cell adhesion, embryonic development, fibroblast transformation and following stimulation of cells by mitogens. Phosphorylation at Ser-244 by CDK5 reduces its interaction with PTK2/FAK1 in matrix-cell focal adhesions (MCFA) during oligodendrocytes (OLs) differentiation. Phosphorylation at Tyr-31 and Tyr-118 by PTK6 promote the activation of RAC1 via CRK/CrKII, thereby promoting migration and invasion. Phosphorylation at Ser-250 by SLK is required for PXN redistribution and cell motility. Phosphorylation at Ser-272 promotes focal adhesion disassembly during cell migration.

The protein resides in the cytoplasm. It is found in the cytoskeleton. The protein localises to the cell junction. Its subcellular location is the focal adhesion. It localises to the cell cortex. Functionally, cytoskeletal protein involved in actin-membrane attachment at sites of cell adhesion to the extracellular matrix (focal adhesion). Recruits other proteins such as TRIM15 to focal adhesion. The polypeptide is Paxillin (Homo sapiens (Human)).